The sequence spans 265 residues: Bidirectional sugar transporter NEC1 (265 aa).

Topologically, residues 1–8 are extracellular; the sequence is MAQLRADD. A helical transmembrane segment spans residues 9-29; it reads LSFIFGLLGNIVSFMVFLAPV. In terms of domain architecture, MtN3/slv 1 spans 11 to 97; sequence FIFGLLGNIV…SLFLFYAPRK (87 aa). Residues 30–44 are Cytoplasmic-facing; it reads PTFYKIYKRKSSEGY. The helical transmembrane segment at 45-65 threads the bilayer; it reads QAIPYMVALFSAGLLLYYAYL. Topologically, residues 66-71 are extracellular; it reads RKNAYL. Residues 72–92 traverse the membrane as a helical segment; it reads IVSINGFGCAIELTYISLFLF. Topologically, residues 93–103 are cytoplasmic; that stretch reads YAPRKSKIFTG. A helical transmembrane segment spans residues 104–124; it reads WLMLLELGALGMVMPITYLLA. Over 125–130 the chain is Extracellular; it reads EGSHRV. Residues 131–151 traverse the membrane as a helical segment; that stretch reads MIVGWICAAINVAVFAAPLSI. The MtN3/slv 2 domain maps to 132–216; sequence IVGWICAAIN…LLYFVYKDSK (85 aa). Residues 152-164 lie on the Cytoplasmic side of the membrane; that stretch reads MRQVIKTKSVEFM. The chain crosses the membrane as a helical span at residues 165–185; that stretch reads PFTLSLFLTLCATMWFFYGFF. Residues 186–190 are Extracellular-facing; sequence KKDFY. A helical membrane pass occupies residues 191–211; it reads IAFPNILGFLFGIVQMLLYFV. The Cytoplasmic segment spans residues 212-265; the sequence is YKDSKRIDDEKSDPVREATKSKEGVEIIINIEDDNSDNALQSMEKDFSRLRTSK.

It belongs to the SWEET sugar transporter family. In terms of assembly, forms homooligomers and/or heterooligomers. Highly expressed in nectary tissue and weakly in the stamen, especially in stomium cells and in the upper part of the filaments.

It is found in the cell membrane. In terms of biological role, mediates both low-affinity uptake and efflux of sugar across the plasma membrane. Promotes the formation of phloem bundles in mid-veins. Probably involved in the development of stomium cells that control anther opening time. Required for pollen viability. The chain is Bidirectional sugar transporter NEC1 (NEC1) from Petunia hybrida (Petunia).